The following is a 299-amino-acid chain: MTATRKSTRPSKPLKATLVAYAKLMRLDRPIGIYLVLWPTLWSLWIAADGLPDWDVLVIFVLGVVLMRSAGCVINDFADRKIDGHVRRTANRPLVTGLITPKQAVLFFVALLVIAFILVLFTNPLTIKLSFGGALLAFCYPFMKRYTQLPQIVLGAAFAWSIPMAFAAQTNQLPEAIWVLYTAVVLWTVAYDTFYAMADREDDLKIGVKSTAILFGDQDRIITACLQLMALVAMAMAGERFGLGFSFKVSLLVAGGLFAYQQYLIRNREPNACFRAFLHNNWVGLVVFLGILVDKLITN.

7 helical membrane passes run 31-51 (IGIY…ADGL), 54-74 (WDVL…GCVI), 105-125 (VLFF…TNPL), 148-168 (QLPQ…AFAA), 177-197 (IWVL…FYAM), 241-261 (FGLG…FAYQ), and 277-297 (FLHN…DKLI).

The protein belongs to the UbiA prenyltransferase family. It depends on Mg(2+) as a cofactor.

Its subcellular location is the cell inner membrane. It catalyses the reaction all-trans-octaprenyl diphosphate + 4-hydroxybenzoate = 4-hydroxy-3-(all-trans-octaprenyl)benzoate + diphosphate. It functions in the pathway cofactor biosynthesis; ubiquinone biosynthesis. Its function is as follows. Catalyzes the prenylation of para-hydroxybenzoate (PHB) with an all-trans polyprenyl group. Mediates the second step in the final reaction sequence of ubiquinone-8 (UQ-8) biosynthesis, which is the condensation of the polyisoprenoid side chain with PHB, generating the first membrane-bound Q intermediate 3-octaprenyl-4-hydroxybenzoate. This chain is 4-hydroxybenzoate octaprenyltransferase, found in Saccharophagus degradans (strain 2-40 / ATCC 43961 / DSM 17024).